Here is a 982-residue protein sequence, read N- to C-terminus: E3 ubiquitin-protein ligase CBL-B (982 aa).

Over residues Met-1–Ser-14 the composition is skewed to low complexity. A disordered region spans residues Met-1–Ser-25. The segment at Pro-46–Gln-178 is 4H. In terms of domain architecture, Cbl-PTB spans Pro-46–Asp-354. Positions Gly-179–Phe-251 are EF-hand-like. Asp-232, Thr-234, Asn-236, Tyr-238, and Glu-243 together coordinate Ca(2+). The interval Gln-252–Asp-354 is SH2-like. Arg-297 is a 4-O-phospho-L-tyrosine binding site. Residues Leu-355–Leu-383 are linker. Residues Cys-384–Arg-423 form an RING-type zinc finger. Disordered regions lie at residues Met-480 to Arg-582, Val-709 to Val-728, and Leu-766 to Arg-911. Positions Arg-483–Ser-497 are enriched in polar residues. Residues Leu-554–Pro-576 are compositionally biased toward pro residues. Residues Pro-825–Ala-834 show a composition bias toward pro residues. Positions Ser-927 to Phe-970 constitute a UBA domain.

Interacts with several SH3 domain-containing proteins and with poly-ubiquitinated proteins.

It localises to the cytoplasm. It carries out the reaction S-ubiquitinyl-[E2 ubiquitin-conjugating enzyme]-L-cysteine + [acceptor protein]-L-lysine = [E2 ubiquitin-conjugating enzyme]-L-cysteine + N(6)-ubiquitinyl-[acceptor protein]-L-lysine.. It functions in the pathway protein modification; protein ubiquitination. E3 ubiquitin-protein ligase which accepts ubiquitin from specific E2 ubiquitin-conjugating enzymes, and transfers it to substrates, generally promoting their degradation by the proteasome. This chain is E3 ubiquitin-protein ligase CBL-B (cblb), found in Xenopus tropicalis (Western clawed frog).